The primary structure comprises 185 residues: UPF0200 protein TON_1344 (185 aa).

7-14 (GMPGSGKS) contacts ATP.

It belongs to the UPF0200 family.

In Thermococcus onnurineus (strain NA1), this protein is UPF0200 protein TON_1344.